A 317-amino-acid polypeptide reads, in one-letter code: GTP cyclohydrolase MptA (317 aa).

The protein belongs to the GTP cyclohydrolase IV family. In terms of assembly, homodimer. Fe(2+) serves as cofactor.

It catalyses the reaction GTP + H2O = 7,8-dihydroneopterin 2',3'-cyclic phosphate + formate + diphosphate + H(+). It functions in the pathway cofactor biosynthesis; 5,6,7,8-tetrahydromethanopterin biosynthesis. Converts GTP to 7,8-dihydro-D-neopterin 2',3'-cyclic phosphate, the first intermediate in the biosynthesis of coenzyme methanopterin. The polypeptide is GTP cyclohydrolase MptA (Methanococcoides burtonii (strain DSM 6242 / NBRC 107633 / OCM 468 / ACE-M)).